The following is a 553-amino-acid chain: Glycerol kinase 3 (553 aa).

Position 20 (Thr20) interacts with substrate. ATP is bound at residue Arg24. Residues Arg94, Tyr148, and Asp259 each coordinate substrate. ATP is bound by residues Thr281, Gly326, and 427–431 (GMTSN).

The protein belongs to the FGGY kinase family.

Its subcellular location is the mitochondrion outer membrane. It localises to the cytoplasm. The enzyme catalyses glycerol + ATP = sn-glycerol 3-phosphate + ADP + H(+). It participates in polyol metabolism; glycerol degradation via glycerol kinase pathway; sn-glycerol 3-phosphate from glycerol: step 1/1. Its function is as follows. May be involved in the regulation of glycerol uptake and metabolism. This is Glycerol kinase 3 from Homo sapiens (Human).